Reading from the N-terminus, the 903-residue chain is MSEEMVPGSQFKSLVEQDMQDCYLRYSMSVIVARALPDARDGFKPVHRRVMYSMHKLGVVPNKGTVKSARIVGDVIGKYHPHGDVAVYDTLARMAQDFSLRYPLVFGQGNFGSIDGDSPAAMRYTEAKMNNLGALMLEDLEKETVDMGPNYDESLEEPLVLPSALPNMIVNGTSGIAVGMATNMAPHNLREVGAAIHALAENPDLTGEDLMEYVKGPDFPTGAIVCGRSGIREAYLTGHGRVRVRARTEIETDAKGKPRIIVTEIPYMVNKAELCKKIADLVRDKRIDGITDIRDESSRDIRIVIELRRDAVGEVVLNNLFKYTQLQTTFSIYNLALVNNLPKLLTLKDLLQVYIDHRLDVITRATQFDLKKAAARLHIIEGLRIATQNIDEVVKIIRQSKTTEIAKQSLQDRFSLDEIQSQAIVDMRLAQLVGLNIEKLEAEYNELIATVADLKDILEKRERRVAIMLQKLDAVVDKYGDERRTTIGEAIDDSDDEDLIAEEEQVITLSKEGYIRRLPIDTFKAQNRGGKGIIGAGLKDEDNVEQIFTASTHSYLLVFTNKGRVYWTKVYRLPEGARNGKGRPIVNFVALTEGEKVQAIVPVRKFGGYFCLVFATKKGIINKMDLTLFSRPRKAGVNAISLDEDDELVKVQLVGMSAEEYEASKNASDDDSAEAVENAAEAQAAEAAIAEESESGDAEDFANRPIPKDLLMIATKNGQAVTFPISCFRAMGRGTHGVKGITLAEGDEVISLLWLKAGNKILTITEKGYGKRSEPGSYRVTRRGSKGVRNLNVTDKIGAAVFVESVADDYDLIITSKDGQVIRIKAADIRLTGRNAQGVKAITLRDGDVVKDATALPSVEDIEQDSADAKETFDKVKGVEVDDDSVVKDDAEKQEIGPTETEE.

The region spanning 36-499 is the Topo IIA-type catalytic domain; the sequence is LPDARDGFKP…AIDDSDDEDL (464 aa). Tyrosine 124 acts as the O-(5'-phospho-DNA)-tyrosine intermediate in catalysis. The GyrA-box signature appears at 526-532; it reads QNRGGKG. Residues 881 to 895 are compositionally biased toward basic and acidic residues; that stretch reads VDDDSVVKDDAEKQE. The segment at 881–903 is disordered; sequence VDDDSVVKDDAEKQEIGPTETEE.

Belongs to the type II topoisomerase GyrA/ParC subunit family. In terms of assembly, heterotetramer, composed of two GyrA and two GyrB chains. In the heterotetramer, GyrA contains the active site tyrosine that forms a transient covalent intermediate with DNA, while GyrB binds cofactors and catalyzes ATP hydrolysis.

Its subcellular location is the cytoplasm. The catalysed reaction is ATP-dependent breakage, passage and rejoining of double-stranded DNA.. Its function is as follows. A type II topoisomerase that negatively supercoils closed circular double-stranded (ds) DNA in an ATP-dependent manner to modulate DNA topology and maintain chromosomes in an underwound state. Negative supercoiling favors strand separation, and DNA replication, transcription, recombination and repair, all of which involve strand separation. Also able to catalyze the interconversion of other topological isomers of dsDNA rings, including catenanes and knotted rings. Type II topoisomerases break and join 2 DNA strands simultaneously in an ATP-dependent manner. The protein is DNA gyrase subunit A of Fibrobacter succinogenes (strain ATCC 19169 / S85).